The following is a 94-amino-acid chain: Putative membrane protein insertion efficiency factor (94 aa).

It belongs to the UPF0161 family.

It localises to the cell inner membrane. Its function is as follows. Could be involved in insertion of integral membrane proteins into the membrane. The sequence is that of Putative membrane protein insertion efficiency factor from Albidiferax ferrireducens (strain ATCC BAA-621 / DSM 15236 / T118) (Rhodoferax ferrireducens).